The following is a 400-amino-acid chain: Transposase for insertion sequence element ISRM3 (400 aa).

Belongs to the transposase mutator family.

Functionally, required for the transposition of the insertion element. The sequence is that of Transposase for insertion sequence element ISRM3 from Rhizobium meliloti (strain 1021) (Ensifer meliloti).